Reading from the N-terminus, the 631-residue chain is Putative ATP-dependent DNA helicase Q1 (631 aa).

Residues 118 to 293 (INAVMSKEDA…KDMLGIQAAL (176 aa)) form the Helicase ATP-binding domain. 131–138 (LSTGGGKS) contacts ATP. Positions 237-240 (DEVH) match the DEVH box motif. In terms of domain architecture, Helicase C-terminal spans 318–466 (CTEEIAKTIK…NLYNMVRYAA (149 aa)). Zn(2+)-binding residues include cysteine 471, cysteine 489, cysteine 493, and cysteine 496. The disordered stretch occupies residues 610-631 (ESKSRKRKASSSVEEEDVMVLD). Over residues 622–631 (VEEEDVMVLD) the composition is skewed to acidic residues.

The protein belongs to the helicase family. RecQ subfamily. Zn(2+) is required as a cofactor.

Its subcellular location is the nucleus. The enzyme catalyses Couples ATP hydrolysis with the unwinding of duplex DNA by translocating in the 3'-5' direction.. It carries out the reaction ATP + H2O = ADP + phosphate + H(+). In terms of biological role, DNA helicase that may play a role in the repair of DNA that is damaged by ultraviolet light or other mutagens. Exhibits a magnesium-dependent ATP-dependent DNA-helicase activity that unwinds single- and double-stranded DNA in a 3'-5' direction. In Caenorhabditis elegans, this protein is Putative ATP-dependent DNA helicase Q1.